Consider the following 757-residue polypeptide: Probable ubiquitin carboxyl-terminal hydrolase MINDY-4 (757 aa).

Disordered regions lie at residues 152 to 173 (FVSS…GETP) and 190 to 334 (SLDV…LPGG). Residues 190–201 (SLDVKRMGENSR) are compositionally biased toward basic and acidic residues. Phosphoserine is present on residues Ser-219 and Ser-223. Low complexity predominate over residues 232–242 (SSPSSSSTQPQ). Residues 254–277 (CTQQDILASSNSSPSRTSLGQLSE) show a composition bias toward polar residues. Ser-289 carries the post-translational modification Phosphoserine. Residues 299 to 310 (PPWDRARPRDPS) show a composition bias toward basic and acidic residues. Cys-456 serves as the catalytic Nucleophile. His-677 functions as the Proton acceptor in the catalytic mechanism.

The protein belongs to the MINDY deubiquitinase family. FAM188 subfamily.

The enzyme catalyses Thiol-dependent hydrolysis of ester, thioester, amide, peptide and isopeptide bonds formed by the C-terminal Gly of ubiquitin (a 76-residue protein attached to proteins as an intracellular targeting signal).. Probable hydrolase that can remove 'Lys-48'-linked conjugated ubiquitin from proteins. The sequence is that of Probable ubiquitin carboxyl-terminal hydrolase MINDY-4 from Homo sapiens (Human).